Here is a 622-residue protein sequence, read N- to C-terminus: Probable potassium transport system protein Kup (622 aa).

12 helical membrane passes run 8–28 (LAAL…TSVL), 50–70 (VLSV…VVLV), 100–120 (GWLL…GVIT), 137–157 (PHFG…LFAV), 169–189 (FGPV…PHIV), 203–223 (ALGF…AVVL), 247–267 (WFSV…ALLL), 285–305 (ALVP…QALI), 337–357 (IYLP…VVMF), 366–386 (AYGI…FFVI), 392–412 (YPLA…LAFF), and 419–439 (LLQG…LMMT).

The protein belongs to the HAK/KUP transporter (TC 2.A.72) family.

The protein resides in the cell inner membrane. It catalyses the reaction K(+)(in) + H(+)(in) = K(+)(out) + H(+)(out). Transport of potassium into the cell. Likely operates as a K(+):H(+) symporter. This Acidovorax ebreus (strain TPSY) (Diaphorobacter sp. (strain TPSY)) protein is Probable potassium transport system protein Kup.